Consider the following 122-residue polypeptide: Serum amyloid A-1 protein (122 aa).

The signal sequence occupies residues 1 to 18; the sequence is MKLLTGLVFCSLVLGVSS. Residues 19–45 are important for amyloid formation; forms amyloid fibrils in vitro; that stretch reads RSFFSFLGEAFDGARDMWRAYSDMREA. The propeptide at 95-122 is often cleaved during amyloidogenesis; that stretch reads LADQAANEWGRSGKDPNHFRPAGLPEKY. Positions 98 to 122 are disordered; the sequence is QAANEWGRSGKDPNHFRPAGLPEKY. Asn101 bears the N4,N4-dimethylasparagine mark.

The protein belongs to the SAA family. Homohexamer; dimer of trimers. Can form amyloid fibrils after partial proteolysis; the native, undenatured protein does not form amyloid fibrils (in vitro). Apolipoprotein of the HDL complex. Binds to heparin. This protein is the precursor of amyloid protein A, which is formed by the removal of approximately 24 residues from the C-terminal end. As to expression, expressed by the liver; secreted in plasma (at protein level).

Its subcellular location is the secreted. Major acute phase protein. In Homo sapiens (Human), this protein is Serum amyloid A-1 protein (SAA1).